The sequence spans 88 residues: Putative membrane protein insertion efficiency factor (88 aa).

The protein belongs to the UPF0161 family.

It localises to the cell membrane. Could be involved in insertion of integral membrane proteins into the membrane. In Lactococcus lactis subsp. lactis (strain IL1403) (Streptococcus lactis), this protein is Putative membrane protein insertion efficiency factor (yrcB).